The primary structure comprises 522 residues: 3'3'-cGAMP-specific phosphodiesterase 2 (522 aa).

Positions 36 to 160 constitute a Response regulatory domain; sequence CVLLVDDDEQ…QKLRTLLYSM (125 aa). Asp-91 is modified (4-aspartylphosphate). Residues 325–522 form the HD-GYP domain; that stretch reads LRETSKELVY…FIAIRASLPD (198 aa). Residues His-382 and Asp-383 each contribute to the a divalent metal cation site. Catalysis depends on Lys-386, which acts as the Proton donor. Residues His-411, His-437, His-438, and Asp-466 each coordinate a divalent metal cation.

In terms of assembly, homodimer. Mn(2+) is required as a cofactor.

The catalysed reaction is 3',3'-cGAMP + H2O = 5'-pApG-3' + H(+). Functionally, phosphodiesterase (PDE) that catalyzes the hydrolysis of 3'3'-cyclic GMP-AMP (3'3'-cGAMP), leading to linear 5'-pApG. Counteracts the function of the 3'3'-cGAMP synthase DncV, and is involved in the modulation of intracellular 3'3'-cGAMP levels. Enhances bacterial chemotaxis and inhibits intestinal colonization in vivo. Thus exerts a crucial role in regulating bacterial infectivity through catalyzing 3'3'-cGAMP degradation. Is specific for 3'3'-cGAMP since it cannot degrade other cGAMP linkage isomers (3'2'-, 2'3'-, and 2'2'-cGAMPs). Is also able to hydrolyze c-di-GMP but not c-di-AMP. This is 3'3'-cGAMP-specific phosphodiesterase 2 from Vibrio cholerae serotype O1 (strain ATCC 39315 / El Tor Inaba N16961).